A 295-amino-acid chain; its full sequence is MSKIRQIAFYGKGGIGKSTTSQNTLAALVELGQKILIVGCDPKADSTRLILNSKAQDTVLSLAAEAGSVEDLELEDVLKLGYKDIKCVESGGPEPGVGCAGRGVITSINFLEENGAYDDVDYVSYDVLGDVVCGGFAMPIRENKAQEIYIVMSGEMMALYAANNIAKGILKYAGTGGVRLGGLICNERQTDREYELAEALAKRLNSKLIHFVPRNNIVQHAELRKQTVLQYAPDSDQANEYRELARKIHENSGKGTIPTPITMEELEEMLLEFGIMKTEEQELAELAAKESAVAK.

An ATP-binding site is contributed by 11 to 18 (GKGGIGKS). Cys99 lines the [4Fe-4S] cluster pocket. ADP-ribosylarginine; by dinitrogenase reductase ADP-ribosyltransferase is present on Arg102. Cys133 is a [4Fe-4S] cluster binding site.

Belongs to the NifH/BchL/ChlL family. In terms of assembly, homodimer. [4Fe-4S] cluster is required as a cofactor. Post-translationally, the reversible ADP-ribosylation of Arg-102 inactivates the nitrogenase reductase and regulates nitrogenase activity.

The catalysed reaction is N2 + 8 reduced [2Fe-2S]-[ferredoxin] + 16 ATP + 16 H2O = H2 + 8 oxidized [2Fe-2S]-[ferredoxin] + 2 NH4(+) + 16 ADP + 16 phosphate + 6 H(+). In terms of biological role, the key enzymatic reactions in nitrogen fixation are catalyzed by the nitrogenase complex, which has 2 components: the iron protein and the molybdenum-iron protein. This is Nitrogenase iron protein from Zymomonas mobilis subsp. mobilis (strain ATCC 31821 / ZM4 / CP4).